A 325-amino-acid chain; its full sequence is 4-diphosphocytidyl-2-C-methyl-D-erythritol kinase (325 aa).

Residue Lys-22 is part of the active site. Residue 110 to 120 participates in ATP binding; that stretch reads PVAGGMAGGSA. Asp-152 is a catalytic residue. The interval 306 to 325 is disordered; the sequence is PAPGARVLEAVSTPSPGGRS.

It belongs to the GHMP kinase family. IspE subfamily.

The enzyme catalyses 4-CDP-2-C-methyl-D-erythritol + ATP = 4-CDP-2-C-methyl-D-erythritol 2-phosphate + ADP + H(+). The protein operates within isoprenoid biosynthesis; isopentenyl diphosphate biosynthesis via DXP pathway; isopentenyl diphosphate from 1-deoxy-D-xylulose 5-phosphate: step 3/6. Its function is as follows. Catalyzes the phosphorylation of the position 2 hydroxy group of 4-diphosphocytidyl-2C-methyl-D-erythritol. In Kineococcus radiotolerans (strain ATCC BAA-149 / DSM 14245 / SRS30216), this protein is 4-diphosphocytidyl-2-C-methyl-D-erythritol kinase.